We begin with the raw amino-acid sequence, 317 residues long: MTTALDQLKQYTTVVADTGDFQQLAQYKPQDATTNPSLILKAVQKDAYKPILEKTVRDHRNESTDFIIDRLLIAFGTEILKLIPGRVSTEVDARLSFDTQRSIDKGRELIKLYEAAGVGRERILIKLASTWEGIRAAEVLQKEGIKCNMTLLFSLVQAAACAEAGAQLISPFVGRIYDWYKKQAGAEWNEARDGGANDPGVQSVRRIYTYYKTFGYKTEVMGASFRTTSQITELAGCDLLTISPDLLQKLQESNETVARKLSPETLQDKPAERVAIDEASFRFQLNDEAMATEKLAEGIRVFAADAVKLEKLIDALR.

Lys-126 serves as the catalytic Schiff-base intermediate with substrate.

This sequence belongs to the transaldolase family. Type 1 subfamily. Homodimer.

The protein resides in the cytoplasm. The enzyme catalyses D-sedoheptulose 7-phosphate + D-glyceraldehyde 3-phosphate = D-erythrose 4-phosphate + beta-D-fructose 6-phosphate. It functions in the pathway carbohydrate degradation; pentose phosphate pathway; D-glyceraldehyde 3-phosphate and beta-D-fructose 6-phosphate from D-ribose 5-phosphate and D-xylulose 5-phosphate (non-oxidative stage): step 2/3. In terms of biological role, transaldolase is important for the balance of metabolites in the pentose-phosphate pathway. This chain is Transaldolase, found in Burkholderia orbicola (strain MC0-3).